The sequence spans 48 residues: uncharacterized protein (48 aa).

A helical membrane pass occupies residues 6–26; it reads IILLMIVCLVVSVLVVVWIIL.

Its subcellular location is the host membrane. This is an uncharacterized protein from Spiroplasma melliferum (SpV4).